The primary structure comprises 1372 residues: DNA-directed RNA polymerase subunit beta (1372 aa).

This sequence belongs to the RNA polymerase beta chain family. The RNAP catalytic core consists of 2 alpha, 1 beta, 1 beta' and 1 omega subunit. When a sigma factor is associated with the core the holoenzyme is formed, which can initiate transcription.

It carries out the reaction RNA(n) + a ribonucleoside 5'-triphosphate = RNA(n+1) + diphosphate. In terms of biological role, DNA-dependent RNA polymerase catalyzes the transcription of DNA into RNA using the four ribonucleoside triphosphates as substrates. This chain is DNA-directed RNA polymerase subunit beta, found in Nitratidesulfovibrio vulgaris (strain DSM 19637 / Miyazaki F) (Desulfovibrio vulgaris).